The chain runs to 250 residues: 3-deoxy-manno-octulosonate cytidylyltransferase (250 aa).

The protein belongs to the KdsB family.

It localises to the cytoplasm. The enzyme catalyses 3-deoxy-alpha-D-manno-oct-2-ulosonate + CTP = CMP-3-deoxy-beta-D-manno-octulosonate + diphosphate. The protein operates within nucleotide-sugar biosynthesis; CMP-3-deoxy-D-manno-octulosonate biosynthesis; CMP-3-deoxy-D-manno-octulosonate from 3-deoxy-D-manno-octulosonate and CTP: step 1/1. Its pathway is bacterial outer membrane biogenesis; lipopolysaccharide biosynthesis. Functionally, activates KDO (a required 8-carbon sugar) for incorporation into bacterial lipopolysaccharide in Gram-negative bacteria. This Thioalkalivibrio sulfidiphilus (strain HL-EbGR7) protein is 3-deoxy-manno-octulosonate cytidylyltransferase.